We begin with the raw amino-acid sequence, 250 residues long: NADH-quinone oxidoreductase subunit C (250 aa).

Disordered stretches follow at residues 1–33 (MSDD…PTGE) and 228–250 (LGGV…RSYN).

Belongs to the complex I 30 kDa subunit family. NDH-1 is composed of 14 different subunits. Subunits NuoB, C, D, E, F, and G constitute the peripheral sector of the complex.

The protein localises to the cell membrane. It catalyses the reaction a quinone + NADH + 5 H(+)(in) = a quinol + NAD(+) + 4 H(+)(out). In terms of biological role, NDH-1 shuttles electrons from NADH, via FMN and iron-sulfur (Fe-S) centers, to quinones in the respiratory chain. The immediate electron acceptor for the enzyme in this species is believed to be a menaquinone. Couples the redox reaction to proton translocation (for every two electrons transferred, four hydrogen ions are translocated across the cytoplasmic membrane), and thus conserves the redox energy in a proton gradient. The polypeptide is NADH-quinone oxidoreductase subunit C (Nocardioides sp. (strain ATCC BAA-499 / JS614)).